The primary structure comprises 157 residues: MLSQWFRGRHLVVRSALFSRRRVSSESTSTKDDVIVDFEDPDLPLPEYPKRPDEPLETRKQRLMYQSRKRGMLENDLLLSTFAHKYLKDFNAEQTALYDDLINGVSNDWDIYYWATGVKQTPKEYDTEIMKLLKLHVDNAERVTRFRQPELTYYLKC.

The N-terminal 22 residues, 1-22 (MLSQWFRGRHLVVRSALFSRRR), are a transit peptide targeting the mitochondrion.

The protein belongs to the SDHAF2 family. As to quaternary structure, interacts with the flavoprotein subunit within the SDH catalytic dimer.

It is found in the mitochondrion matrix. Its function is as follows. Plays an essential role in the assembly of succinate dehydrogenase (SDH), an enzyme complex (also referred to as respiratory complex II) that is a component of both the tricarboxylic acid (TCA) cycle and the mitochondrial electron transport chain, and which couples the oxidation of succinate to fumarate with the reduction of ubiquinone (coenzyme Q) to ubiquinol. Required for flavinylation (covalent attachment of FAD) of the flavoprotein subunit of the SDH catalytic dimer. This Drosophila mojavensis (Fruit fly) protein is Succinate dehydrogenase assembly factor 2-B, mitochondrial.